The primary structure comprises 175 residues: NADH-quinone oxidoreductase subunit I (175 aa).

4Fe-4S ferredoxin-type domains follow at residues 69–98 (KRDE…IEAA) and 115–144 (KKFE…LDGP). [4Fe-4S] cluster-binding residues include Cys78, Cys81, Cys84, Cys88, Cys124, Cys127, Cys130, and Cys134.

It belongs to the complex I 23 kDa subunit family. NDH-1 is composed of 14 different subunits. Subunits NuoA, H, J, K, L, M, N constitute the membrane sector of the complex. It depends on [4Fe-4S] cluster as a cofactor.

The protein localises to the cell inner membrane. It catalyses the reaction a quinone + NADH + 5 H(+)(in) = a quinol + NAD(+) + 4 H(+)(out). In terms of biological role, NDH-1 shuttles electrons from NADH, via FMN and iron-sulfur (Fe-S) centers, to quinones in the respiratory chain. The immediate electron acceptor for the enzyme in this species is believed to be ubiquinone. Couples the redox reaction to proton translocation (for every two electrons transferred, four hydrogen ions are translocated across the cytoplasmic membrane), and thus conserves the redox energy in a proton gradient. The chain is NADH-quinone oxidoreductase subunit I from Leptospira interrogans serogroup Icterohaemorrhagiae serovar Lai (strain 56601).